The following is a 339-amino-acid chain: DNA-directed RNA polymerase subunit alpha (339 aa).

The alpha N-terminal domain (alpha-NTD) stretch occupies residues 1–235; the sequence is MVLQKNWQSL…DQLQLFINFD (235 aa). The segment at 251–339 is alpha C-terminal domain (alpha-CTD); it reads FNRNLLRKVD…DLAKRLDETF (89 aa).

The protein belongs to the RNA polymerase alpha chain family. As to quaternary structure, homodimer. The RNAP catalytic core consists of 2 alpha, 1 beta, 1 beta' and 1 omega subunit. When a sigma factor is associated with the core the holoenzyme is formed, which can initiate transcription.

The enzyme catalyses RNA(n) + a ribonucleoside 5'-triphosphate = RNA(n+1) + diphosphate. In terms of biological role, DNA-dependent RNA polymerase catalyzes the transcription of DNA into RNA using the four ribonucleoside triphosphates as substrates. The protein is DNA-directed RNA polymerase subunit alpha of Gluconobacter oxydans (strain 621H) (Gluconobacter suboxydans).